We begin with the raw amino-acid sequence, 406 residues long: Cytochrome P450 165C4 (406 aa).

C356 provides a ligand contact to heme.

It belongs to the cytochrome P450 family. It depends on heme as a cofactor.

Its pathway is antibiotic biosynthesis; vancomycin biosynthesis. Its function is as follows. Involved in the coupling of aromatic side chains of the heptapeptide of vancomycin. This is Cytochrome P450 165C4 (cyp165C4) from Amycolatopsis orientalis (Nocardia orientalis).